We begin with the raw amino-acid sequence, 173 residues long: Lens fiber membrane intrinsic protein (173 aa).

Over 1 to 3 (MYS) the chain is Cytoplasmic. A helical transmembrane segment spans residues 4–24 (FMGGGLFCAWVGTILLVVATA). Residues 25-66 (TDHWMQYRLSGSFAHQGLWRYCLGNKCFLQTESIAYWNATRA) lie on the Extracellular side of the membrane. Trp-43 and Trp-61 each carry a C-linked (Man) tryptophan glycan. N-linked (GlcNAc...) asparagine glycosylation occurs at Asn-62. A helical transmembrane segment spans residues 67–87 (FMILSALCATSGIIMGVLAFA). Over 88–98 (QQSTFTRLSRP) the chain is Cytoplasmic. Residues 99–119 (FSAGIMFFASTLFVLLALAIY) form a helical membrane-spanning segment. Residues 120 to 140 (TGVTVSFLGRRFGDWRFSWSY) are Extracellular-facing. The chain crosses the membrane as a helical span at residues 141–161 (ILGWVALLMTFFAGIFYMCAY). The Cytoplasmic portion of the chain corresponds to 162 to 173 (RMHECRRLSTPR). Phosphoserine is present on Ser-170. Position 171 is a phosphothreonine (Thr-171).

This sequence belongs to the PMP-22/EMP/MP20 family. As to quaternary structure, seems to be associated with itself or another lens membrane component via disulfide bonds. As to expression, eye lens specific.

The protein resides in the membrane. In terms of biological role, present in the thicker 16-17 nm junctions of mammalian lens fiber cells, where it may contribute to cell junctional organization. Acts as a receptor for calmodulin. May play an important role in both lens development and cataractogenesis. This Rattus norvegicus (Rat) protein is Lens fiber membrane intrinsic protein (Lim2).